Here is a 529-residue protein sequence, read N- to C-terminus: Glucose transporter 2A (529 aa).

Residues 1–22 form a disordered region; sequence MTERRDNVSHAPDAIEGPNDGA. Topologically, residues 1-43 are cytoplasmic; it reads MTERRDNVSHAPDAIEGPNDGAHAEDTSPGFFSFENLGVAQVQ. A helical transmembrane segment spans residues 44–64; sequence VVGGTLNGFSIGFVAVYILLY. Over 65-119 the chain is Extracellular; it reads EVATNCSLFKTTEACKAVGSYGCEWKDTEVCSWKKECDSDSDGVNPCESLIGYSS. A helical membrane pass occupies residues 120-140; sequence LYSGIFASAMIVGSMVGSIIA. Topologically, residues 141–152 are cytoplasmic; that stretch reads GKCITMFGLKKS. The helical transmembrane segment at 153–173 threads the bilayer; it reads FIIVGVMSVVASALNHISVAT. Residues 174–175 lie on the Extracellular side of the membrane; sequence NE. Residues 176 to 196 form a helical membrane-spanning segment; the sequence is FWVLCAGRVLMGIGLGVVCVI. Residues 197–214 are Cytoplasmic-facing; it reads CPMYVNENAHPKLSKVDG. The helical transmembrane segment at 215-235 threads the bilayer; it reads VLFQVFITFGIMLAAMLGLIL. Residues 236 to 250 are Extracellular-facing; it reads DKTVNYDNDPDMAGR. Residues 251 to 271 form a helical membrane-spanning segment; sequence FHGFCAVSSVLSVAMFLVGMF. At 272-300 the chain is on the cytoplasmic side; the sequence is LRESTATFSQDDDGKADGGMDPNEYGWGQ. A helical transmembrane segment spans residues 301 to 321; the sequence is MLWPLFMGAVTAGTLQLTGIN. Residues 322 to 339 are Extracellular-facing; the sequence is AVMNYAPKITENLGMDPS. The helical transmembrane segment at 340 to 360 threads the bilayer; it reads LGNFLVMAWNFVTSLVAIPLA. The Cytoplasmic portion of the chain corresponds to 361–368; that stretch reads SRFTMRQM. A helical transmembrane segment spans residues 369-389; sequence FITCSFVASCMCLFLCGIPVF. Residues 390–404 lie on the Extracellular side of the membrane; the sequence is PGVAEEKVKNGVATT. Residues 405–425 traverse the membrane as a helical segment; the sequence is GIALFIAAFEFGVGSCFFVLA. At 426-439 the chain is on the cytoplasmic side; it reads QDLFPPSFRPKGSS. A helical membrane pass occupies residues 440-460; it reads FVVMMQFIFNILINLLYPITT. Residues 461 to 476 are Extracellular-facing; the sequence is EAISGGATGDQDKGQA. Residues 477–497 form a helical membrane-spanning segment; sequence VVFILFGLIGLICFVLQFFYL. The Cytoplasmic segment spans residues 498 to 529; it reads YPYDANQDHENDHGTEPVERILSPVDVPTPRN. The interval 508 to 529 is disordered; the sequence is NDHGTEPVERILSPVDVPTPRN.

The protein belongs to the major facilitator superfamily. Sugar transporter (TC 2.A.1.1) family.

Its subcellular location is the membrane. Facilitative glucose transporter. The protein is Glucose transporter 2A (THT2A) of Trypanosoma brucei brucei.